We begin with the raw amino-acid sequence, 1116 residues long: Eukaryotic translation initiation factor 2-alpha kinase 3 (1116 aa).

The signal sequence occupies residues 1–29 (MERAISPGLLVRALLLLLLLLGLAARTVA). Over 30 to 514 (AGRARGLPAP…HYNKNIRKKD (485 aa)) the chain is Lumenal. Positions 77–101 (ALPAAAGEQEPRGPEPDDETELRPR) are disordered. An N-linked (GlcNAc...) asparagine glycan is attached at asparagine 258. A helical transmembrane segment spans residues 515 to 535 (PVLLLHWWKEIVATILFCIIA). Topologically, residues 536-1116 (TTFIVRRLFH…NNSHSPLPSN (581 aa)) are cytoplasmic. The disordered stretch occupies residues 550–571 (RQRKESETQCQTENKYDSVSGE). Residues 593–1077 (FEPIQCLGRG…AINIIENAVF (485 aa)) enclose the Protein kinase domain. 599–607 (LGRGGFGVV) is a binding site for ATP. A Phosphotyrosine; by autocatalysis modification is found at tyrosine 619. An ATP-binding site is contributed by lysine 622. The segment at 647–888 (EHPGIVRYFN…SPKVYLYIQM (242 aa)) is insert loop. Residue serine 715 is modified to Phosphoserine. Threonine 802 bears the Phosphothreonine mark. The segment at 841–863 (KPTSSKSSSEATLSISPPRPTTL) is disordered. Over residues 844–856 (SSKSSSEATLSIS) the composition is skewed to low complexity. The active-site Proton acceptor is the aspartate 937. Phosphothreonine is present on threonine 982. The disordered stretch occupies residues 1090 to 1116 (QRSRSLSSSGTKHSRQSNNSHSPLPSN). Phosphoserine is present on serine 1094. A compositionally biased stretch (polar residues) spans 1105–1116 (QSNNSHSPLPSN).

Belongs to the protein kinase superfamily. Ser/Thr protein kinase family. GCN2 subfamily. In terms of assembly, forms dimers with HSPA5/BIP in resting cells. Homotetramerizes in response to endoplasmic reticulum (ER) stress, leading to its activation. Interacts with HSP90B1/GRP94. Interacts with DNAJC3; inhibiting EIF2AK3/PERK activity. Interacts with ATAD3A; ATAD3A and EIF2S1/eIF-2-alpha occupy a common binding site within the cytoplasmic loop of EIF2AK3/PERK, leading to prevent EIF2AK3/PERK association with its substrate EIF2S1/eIF-2-alpha. Interacts with MFN2. Interacts with TMEM33. Interacts with PDIA6. Interacts with LACC1. Oligomerization of the N-terminal ER luminal domain by ER stress promotes EIF2AK3/PERK trans-autophosphorylation of the C-terminal cytoplasmic kinase domain at multiple residues including Thr-982 on the kinase activation loop. Autophosphorylated at Tyr-619 following endoplasmic reticulum stress, leading to activate its activity. Dephosphorylated at Tyr-619 by PTPN1/PTP1B, leading to inactivate its enzyme activity. Phosphorylation at Thr-802 by AKT (AKT1, AKT2 and/or AKT3) inactivates EIF2AK3/PERK. In terms of processing, ADP-ribosylated by PARP16 upon ER stress, which increases kinase activity. In terms of tissue distribution, ubiquitous. A high level expression is seen in secretory tissues.

The protein resides in the endoplasmic reticulum membrane. It catalyses the reaction L-seryl-[protein] + ATP = O-phospho-L-seryl-[protein] + ADP + H(+). The catalysed reaction is L-threonyl-[protein] + ATP = O-phospho-L-threonyl-[protein] + ADP + H(+). It carries out the reaction L-tyrosyl-[protein] + ATP = O-phospho-L-tyrosyl-[protein] + ADP + H(+). Its activity is regulated as follows. Inhibited by HSPA5/BIP in absence of stress. Perturbation in protein folding in the endoplasmic reticulum (ER) promotes reversible dissociation from HSPA5/BIP and oligomerization, resulting in trans-autophosphorylation and kinase activity induction. Inactivated following phosphorylation at Thr-802 by AKT (AKT1, AKT2 and/or AKT3). Inhibited by ATAD3A at mitochondria-endoplasmic reticulum contact sites, providing a safe haven for mitochondrial protein translation during ER stress. Functionally, metabolic-stress sensing protein kinase that phosphorylates the alpha subunit of eukaryotic translation initiation factor 2 (EIF2S1/eIF-2-alpha) in response to various stress, such as unfolded protein response (UPR). Key effector of the integrated stress response (ISR) to unfolded proteins: EIF2AK3/PERK specifically recognizes and binds misfolded proteins, leading to its activation and EIF2S1/eIF-2-alpha phosphorylation. EIF2S1/eIF-2-alpha phosphorylation in response to stress converts EIF2S1/eIF-2-alpha in a global protein synthesis inhibitor, leading to a global attenuation of cap-dependent translation, while concomitantly initiating the preferential translation of ISR-specific mRNAs, such as the transcriptional activators ATF4 and QRICH1, and hence allowing ATF4- and QRICH1-mediated reprogramming. The EIF2AK3/PERK-mediated unfolded protein response increases mitochondrial oxidative phosphorylation by promoting ATF4-mediated expression of COX7A2L/SCAF1, thereby increasing formation of respiratory chain supercomplexes. In contrast to most subcellular compartments, mitochondria are protected from the EIF2AK3/PERK-mediated unfolded protein response due to EIF2AK3/PERK inhibition by ATAD3A at mitochondria-endoplasmic reticulum contact sites. In addition to EIF2S1/eIF-2-alpha, also phosphorylates NFE2L2/NRF2 in response to stress, promoting release of NFE2L2/NRF2 from the BCR(KEAP1) complex, leading to nuclear accumulation and activation of NFE2L2/NRF2. Serves as a critical effector of unfolded protein response (UPR)-induced G1 growth arrest due to the loss of cyclin-D1 (CCND1). Involved in control of mitochondrial morphology and function. The chain is Eukaryotic translation initiation factor 2-alpha kinase 3 from Homo sapiens (Human).